We begin with the raw amino-acid sequence, 559 residues long: Membrane protein insertase YidC (559 aa).

6 consecutive transmembrane segments (helical) span residues 5–25, 332–352, 355–375, 429–449, 474–494, and 520–540; these read IVNL…WQYF, AIDF…MNFF, YVGN…LLMF, LPIL…YVTI, LFGL…WPIL, and FMPL…LIYW.

It belongs to the OXA1/ALB3/YidC family. Type 1 subfamily. As to quaternary structure, interacts with the Sec translocase complex via SecD. Specifically interacts with transmembrane segments of nascent integral membrane proteins during membrane integration.

Its subcellular location is the cell inner membrane. Required for the insertion and/or proper folding and/or complex formation of integral membrane proteins into the membrane. Involved in integration of membrane proteins that insert both dependently and independently of the Sec translocase complex, as well as at least some lipoproteins. Aids folding of multispanning membrane proteins. In Rickettsia bellii (strain OSU 85-389), this protein is Membrane protein insertase YidC.